A 505-amino-acid polypeptide reads, in one-letter code: Deoxyguanosinetriphosphate triphosphohydrolase (505 aa).

Residues Arg66–Cys273 form the HD domain.

It belongs to the dGTPase family. Type 1 subfamily. In terms of assembly, homotetramer. It depends on Mg(2+) as a cofactor.

It carries out the reaction dGTP + H2O = 2'-deoxyguanosine + triphosphate + H(+). Its function is as follows. dGTPase preferentially hydrolyzes dGTP over the other canonical NTPs. The protein is Deoxyguanosinetriphosphate triphosphohydrolase of Salmonella typhimurium (strain LT2 / SGSC1412 / ATCC 700720).